A 203-amino-acid chain; its full sequence is Urease accessory protein UreG (203 aa).

Residue 13 to 20 (GPVGSGKT) participates in GTP binding.

This sequence belongs to the SIMIBI class G3E GTPase family. UreG subfamily. In terms of assembly, homodimer. UreD, UreF and UreG form a complex that acts as a GTP-hydrolysis-dependent molecular chaperone, activating the urease apoprotein by helping to assemble the nickel containing metallocenter of UreC. The UreE protein probably delivers the nickel.

The protein localises to the cytoplasm. Functionally, facilitates the functional incorporation of the urease nickel metallocenter. This process requires GTP hydrolysis, probably effectuated by UreG. This chain is Urease accessory protein UreG, found in Methylobacillus flagellatus (strain ATCC 51484 / DSM 6875 / VKM B-1610 / KT).